Reading from the N-terminus, the 1062-residue chain is Inversin (1062 aa).

ANK repeat units follow at residues 13 to 42, 47 to 76, 80 to 110, 113 to 144, 148 to 177, 181 to 213, 220 to 250, 254 to 283, 288 to 317, 321 to 350, 356 to 385, 389 to 418, 422 to 451, 455 to 484, 488 to 517, and 523 to 553; these read SLASQVHAAAVNGDKGALQRLIVGNSALRD, FGRTPLMYCVLADRVDCADALLKAGADVNK, SRRTALHLAAQKGNYRFMKLLLTRRANWMQK, EEMTPLHLSTRHRSPKCLALLLKFMAPGEVDT, NKQTALHWSAYYNNPEHAKLLIKHDSNIGI, EGKIPLHWAANHKDPSAVHTVRCILDAAPTESL, EGRTPLHFAVADGNLTVVDVLTSYESCNITS, LFRTPLHWAALLGHAQIVHLLLERNKSGTI, QGATPLHYAAQSNFAETVKVFLQHPSVKDD, EGRTSFMWAAGKGNDDVLRTMLSLKSDIDI, YGGTALHAAALSGHVSTVKLLLDNDAQVDA, MKHTPLFRACEMGHRDVIQTLIKGGARVDL, DGHSLLHWAALGGNADVCQILIENKINPNV, AGRTPLQCAAYGGYINCMAVLMENNADPNI, EGRTALHWSCNNGYLDAIKLLLDFAAFPNQ, and ERYTPLDYALLGERHEVIQFMLEHGALSIAA. Asn-75 is subject to 3-hydroxyasparagine. The D-box 1 signature appears at 490–498; sequence RTALHWSCN. An IQ 1 domain is found at 555–584; it reads QDIAAFKIQAVYKGYKVRKAFRDRKNLLMK. The segment covering 589–608 has biased composition (basic and acidic residues); the sequence is RKDAAAKKREEENKRKEAEQ. Residues 589–849 are disordered; the sequence is RKDAAAKKRE…QDKLIGGVSS (261 aa). Polar residues-rich tracts occupy residues 636–658 and 676–689; these read QNEGSKQDATPSKQPPASHTVQS and QGDSSIDLQGTASR. The segment covering 690 to 700 has biased composition (basic and acidic residues); it reads KPSETPIEHCR. Polar residues predominate over residues 713–724; sequence GGNSSKNQGTSS. Composition is skewed to basic and acidic residues over residues 725-741 and 775-788; these read VEKRRGETNGKHRRCEE and DHPRKPNKRQDRAA. Residues 907 to 915 carry the D-box 2 motif; it reads RKELFRRKN. The 30-residue stretch at 914–943 folds into the IQ 2 domain; the sequence is KNKAAAVIQRAWRSYQLRKHLSRLLHLKQL. A disordered region spans residues 1042-1062; that stretch reads RSKKFSYNLQPSSQSKNKPKL. Over residues 1046–1062 the composition is skewed to polar residues; that stretch reads FSYNLQPSSQSKNKPKL.

In terms of assembly, interacts with microtubules. Interacts with NPHP1. Interacts with DVL1, PRICKLE (PRICKLE1 or PRICKLE2) and Strabismus (VANGL1 or VANGL2). Binds calmodulin via its IQ domains. Interacts with APC2. Interacts with alpha-, beta-, and gamma-catenin. Interacts with N-cadherin (CDH2). Interacts with NPHP3. Interacts with IQCB1; the interaction likely requires additional interactors. Component of a complex containing at least ANKS6, INVS, NEK8 and NPHP3. ANKS6 may organize complex assembly by linking INVS and NPHP3 to NEK8 and INVS may target the complex to the proximal ciliary axoneme. In terms of processing, may be ubiquitinated via its interaction with APC2. Hydroxylated at Asn-75, most probably by HIF1AN. As to expression, strongly expressed in the primary cilia of renal cells, especially in the varicosities, swellings observed in the cilia. Localizes in the node monocilia and in other 9+0 monocilia, including those of kidney epithelial cells and the pituitary gland, but it does not localize to 9+2 cilia (at protein level). In adult, it is expressed at high level in liver and kidney. Weakly or not expressed in other tissues.

The protein resides in the cytoplasm. Its subcellular location is the cytoskeleton. It is found in the membrane. It localises to the nucleus. The protein localises to the perinuclear region. The protein resides in the spindle. Its function is as follows. Required for normal renal development and establishment of left-right axis. Probably acts as a molecular switch between different Wnt signaling pathways. Inhibits the canonical Wnt pathway by targeting cytoplasmic disheveled (DVL1) for degradation by the ubiquitin-proteasome. This suggests that it is required in renal development to oppose the repression of terminal differentiation of tubular epithelial cells by Wnt signaling. Involved in the organization of apical junctions in kidney cells together with NPHP1, NPHP4 and RPGRIP1L/NPHP8. Does not seem to be strictly required for ciliogenesis. The sequence is that of Inversin (Invs) from Mus musculus (Mouse).